A 166-amino-acid polypeptide reads, in one-letter code: Large ribosomal subunit protein uL10 (166 aa).

The protein belongs to the universal ribosomal protein uL10 family. In terms of assembly, part of the ribosomal stalk of the 50S ribosomal subunit. The N-terminus interacts with L11 and the large rRNA to form the base of the stalk. The C-terminus forms an elongated spine to which L12 dimers bind in a sequential fashion forming a multimeric L10(L12)X complex.

Its function is as follows. Forms part of the ribosomal stalk, playing a central role in the interaction of the ribosome with GTP-bound translation factors. The chain is Large ribosomal subunit protein uL10 from Shewanella oneidensis (strain ATCC 700550 / JCM 31522 / CIP 106686 / LMG 19005 / NCIMB 14063 / MR-1).